Consider the following 300-residue polypeptide: Zinc finger protein RME1 (300 aa).

Positions 80-90 (QAYDSTSSTEE) are enriched in polar residues. The disordered stretch occupies residues 80–100 (QAYDSTSSTEEGTAPQLRPDE). 3 C2H2-type zinc fingers span residues 178 to 199 (YHCSHCSEKFATLVEFAAHLDE), 206 to 234 (CKCPIEQCPWKILGFQQATGLRRHCASQH), and 256 to 281 (LNCPFPICQKTFRRKDAYKRHVAMVH).

The protein resides in the nucleus. Its function is as follows. Involved in the control of meiosis. Represses the transcription of the IME1 gene thereby inhibiting cells from entering meiosis. But also activates the CLN2 gene thus promoting mitosis. The sequence is that of Zinc finger protein RME1 (RME1) from Saccharomyces cerevisiae (strain ATCC 204508 / S288c) (Baker's yeast).